We begin with the raw amino-acid sequence, 122 residues long: Small ribosomal subunit protein uS13 (122 aa).

The disordered stretch occupies residues 93–122 (RRGLPVRGQRTKTNARTRKGPKKTVAGKKK).

The protein belongs to the universal ribosomal protein uS13 family. Part of the 30S ribosomal subunit. Forms a loose heterodimer with protein S19. Forms two bridges to the 50S subunit in the 70S ribosome.

In terms of biological role, located at the top of the head of the 30S subunit, it contacts several helices of the 16S rRNA. In the 70S ribosome it contacts the 23S rRNA (bridge B1a) and protein L5 of the 50S subunit (bridge B1b), connecting the 2 subunits; these bridges are implicated in subunit movement. Contacts the tRNAs in the A and P-sites. The polypeptide is Small ribosomal subunit protein uS13 (Micrococcus luteus (strain ATCC 4698 / DSM 20030 / JCM 1464 / CCM 169 / CCUG 5858 / IAM 1056 / NBRC 3333 / NCIMB 9278 / NCTC 2665 / VKM Ac-2230) (Micrococcus lysodeikticus)).